The chain runs to 344 residues: Uroporphyrinogen decarboxylase (344 aa).

Residues 23-27 (RQAGR), D73, Y149, T204, and H321 contribute to the substrate site.

The protein belongs to the uroporphyrinogen decarboxylase family. Homodimer.

The protein localises to the cytoplasm. The enzyme catalyses uroporphyrinogen III + 4 H(+) = coproporphyrinogen III + 4 CO2. Its pathway is porphyrin-containing compound metabolism; protoporphyrin-IX biosynthesis; coproporphyrinogen-III from 5-aminolevulinate: step 4/4. Catalyzes the decarboxylation of four acetate groups of uroporphyrinogen-III to yield coproporphyrinogen-III. The polypeptide is Uroporphyrinogen decarboxylase (Francisella philomiragia subsp. philomiragia (strain ATCC 25017 / CCUG 19701 / FSC 153 / O#319-036)).